We begin with the raw amino-acid sequence, 268 residues long: L-aspartate dehydrogenase (268 aa).

Residues A125 and N191 each contribute to the NAD(+) site. The active site involves H221.

This sequence belongs to the L-aspartate dehydrogenase family.

The enzyme catalyses L-aspartate + NADP(+) + H2O = oxaloacetate + NH4(+) + NADPH + H(+). It carries out the reaction L-aspartate + NAD(+) + H2O = oxaloacetate + NH4(+) + NADH + H(+). It participates in cofactor biosynthesis; NAD(+) biosynthesis; iminoaspartate from L-aspartate (dehydrogenase route): step 1/1. Functionally, specifically catalyzes the NAD or NADP-dependent dehydrogenation of L-aspartate to iminoaspartate. In Brucella anthropi (strain ATCC 49188 / DSM 6882 / CCUG 24695 / JCM 21032 / LMG 3331 / NBRC 15819 / NCTC 12168 / Alc 37) (Ochrobactrum anthropi), this protein is L-aspartate dehydrogenase.